A 277-amino-acid chain; its full sequence is Shikimate dehydrogenase (NADP(+)) (277 aa).

Shikimate is bound by residues 15–17 and Thr62; that span reads SLS. Catalysis depends on Lys66, which acts as the Proton acceptor. Shikimate-binding residues include Asn87 and Asp102. NADP(+)-binding positions include 127–131, 151–156, and Ile219; these read GAGGA and NRTVDK. Tyr221 contacts shikimate. Gly242 is a binding site for NADP(+).

Belongs to the shikimate dehydrogenase family. As to quaternary structure, homodimer.

The catalysed reaction is shikimate + NADP(+) = 3-dehydroshikimate + NADPH + H(+). The protein operates within metabolic intermediate biosynthesis; chorismate biosynthesis; chorismate from D-erythrose 4-phosphate and phosphoenolpyruvate: step 4/7. Functionally, involved in the biosynthesis of the chorismate, which leads to the biosynthesis of aromatic amino acids. Catalyzes the reversible NADPH linked reduction of 3-dehydroshikimate (DHSA) to yield shikimate (SA). This is Shikimate dehydrogenase (NADP(+)) from Bacillus cereus (strain AH820).